The chain runs to 972 residues: Peptidyl-glycine alpha-amidating monooxygenase (972 aa).

The N-terminal stretch at 1–20 is a signal peptide; sequence MAGFRSLLVLLLVFPSGCVG. A peptidylglycine alpha-hydroxylating monooxygenase region spans residues 1 to 494; sequence MAGFRSLLVL…EGTWEPEHTG (494 aa). The propeptide occupies 21–30; that stretch reads FRSPLSVFKR. The Intragranular portion of the chain corresponds to 31 to 873; that stretch reads FKETTRSFSN…VPAVLITTLL (843 aa). 5 disulfides stabilise this stretch: cysteine 42/cysteine 181, cysteine 76/cysteine 121, cysteine 109/cysteine 126, cysteine 222/cysteine 329, and cysteine 288/cysteine 310. Cu(2+)-binding residues include histidine 102 and histidine 103. The Cu(2+) site is built by histidine 167, histidine 237, histidine 239, and methionine 309. Residues 495–817 are peptidyl-alpha-hydroxyglycine alpha-amidating lyase; it reads DFHVEEALDW…STEKMEHRSV (323 aa). 4 NHL repeats span residues 498-541, 567-608, 617-662, and 670-714; these read VEEA…NSFD, AAVL…LDPK, LGRS…FSPS, and GEAS…FKTD. Valine 517 contributes to the Ca(2+) binding site. Arginine 530 is an a protein binding site. Histidine 582 provides a ligand contact to Zn(2+). Residue leucine 584 participates in Ca(2+) binding. A disulfide bond links cysteine 631 and cysteine 652. Residue tyrosine 651 participates in a protein binding. Histidine 687 contacts Zn(2+). Cysteine 699 and cysteine 710 form a disulfide bridge. Arginine 703 is a binding site for a protein. Asparagine 762 carries an N-linked (GlcNAc...) asparagine glycan. Residues 766 to 809 form an NHL 5 repeat; it reads GEIIDVFKPVRKHFDMPHDIAASEDGTVYVGDAHTNTVWKFTST. Histidine 783 lines the Zn(2+) pocket. Aspartate 784 serves as a coordination point for Ca(2+). Residues 874-897 form a helical membrane-spanning segment; sequence VIPVVVLLAIALFIRWKKSRAFGD. At 898–972 the chain is on the cytoplasmic side; that stretch reads SERKLEASSG…APPPAPAPSS (75 aa). The tract at residues 925–942 is interaction with RASSF9; sequence NFFASRKGYSRKGFDRLS. 2 positions are modified to phosphoserine: serine 929 and serine 942. The disordered stretch occupies residues 937 to 972; it reads GFDRLSTEGSDQEKDEDASESEEEYSAPPPAPAPSS. Residue threonine 943 is modified to Phosphothreonine. Serine 946 is subject to Phosphoserine; by UHMK1. Acidic residues predominate over residues 949–961; it reads EKDEDASESEEEY. Serine 957 is modified (phosphoserine). The segment covering 963 to 972 has biased composition (pro residues); the sequence is APPPAPAPSS.

In the C-terminal section; belongs to the peptidyl-alpha-hydroxyglycine alpha-amidating lyase family. It in the N-terminal section; belongs to the copper type II ascorbate-dependent monooxygenase family. In terms of assembly, monomer. Interacts with RASSF9. The cofactor is Zn(2+). Cu(2+) serves as cofactor.

Its subcellular location is the cytoplasmic vesicle. It is found in the secretory vesicle membrane. The enzyme catalyses a [peptide]-C-terminal glycine + 2 L-ascorbate + O2 = a [peptide]-C-terminal (2S)-2-hydroxyglycine + 2 monodehydro-L-ascorbate radical + H2O. It catalyses the reaction a [peptide]-C-terminal (2S)-2-hydroxyglycine = a [peptide]-C-terminal amide + glyoxylate. The catalysed reaction is N-dodecanoylglycine + 2 L-ascorbate + O2 = N-dodecanoyl-(2S)-hydroxyglycine + 2 monodehydro-L-ascorbate radical + H2O. It carries out the reaction N-dodecanoyl-(2S)-hydroxyglycine = dodecanamide + glyoxylate. The enzyme catalyses N-(9Z,12Z,15Z)-octadecatrienoylglycine + 2 L-ascorbate + O2 = N-(9Z,12Z,15Z)-octadecatrienoyl-(2S)-hydroxyglycine + 2 monodehydro-L-ascorbate radical + H2O. It catalyses the reaction N-(9Z,12Z,15Z)-octadecatrienoyl-(2S)-hydroxyglycine = (9Z,12Z,15Z)-octadecatrienamide + glyoxylate. The catalysed reaction is N-(9Z-octadecenoyl)glycine + 2 L-ascorbate + O2 = N-(9Z-octadecenoyl)-(2S)-hydroxyglycine + 2 monodehydro-L-ascorbate radical + H2O. It carries out the reaction N-(9Z-octadecenoyl)-(2S)-hydroxyglycine = (9Z)-octadecenamide + glyoxylate. The enzyme catalyses N-tetradecanoylglycine + 2 L-ascorbate + O2 = N-tetradecanoyl-(2S)-hydroxyglycine + 2 monodehydro-L-ascorbate radical + H2O. It catalyses the reaction N-tetradecanoyl-(2S)-hydroxyglycine = tetradecamide + glyoxylate. The catalysed reaction is N-decanoylglycine + 2 L-ascorbate + O2 = N-decanoyl-(2S)-hydroxyglycine + 2 monodehydro-L-ascorbate radical + H2O. It carries out the reaction N-decanoyl-(2S)-hydroxyglycine = decanamide + glyoxylate. The enzyme catalyses N-octanoylglycine + 2 L-ascorbate + O2 = N-octanoyl-(2S)-hydroxyglycine + 2 monodehydro-L-ascorbate radical + H2O. It catalyses the reaction N-octanoyl-(2S)-hydroxyglycine = octanamide + glyoxylate. Its activity is regulated as follows. PAM activity is inhibited by EDTA, phenylglyoxal and diethyl pyrocarbonate. PAL activity is stimulated by cadmium and inhibited by mercury. Bifunctional enzyme that catalyzes amidation of the C-terminus of proteins. Alpha-amidation is present at the C-terminus of many endocrine hormones and neuropeptides and is required for their activity. C-terminal amidation also takes place in response to protein fragmentation triggered by oxidative stress, promoting degradation of amidated protein fragments by the proteasome. Alpha-amidation involves two sequential reactions, both of which are catalyzed by separate catalytic domains of the enzyme. The first step, catalyzed by peptidyl alpha-hydroxylating monooxygenase (PHM) domain, is the copper-, ascorbate-, and O2- dependent stereospecific hydroxylation (with S stereochemistry) at the alpha-carbon (C-alpha) of the C-terminal glycine of the peptidylglycine substrate. The second step, catalyzed by the peptidylglycine amidoglycolate lyase (PAL) domain, is the zinc-dependent cleavage of the N-C-alpha bond, producing the alpha-amidated peptide and glyoxylate. Similarly, catalyzes the two-step conversion of an N-fatty acylglycine to a primary fatty acid amide and glyoxylate. In Bos taurus (Bovine), this protein is Peptidyl-glycine alpha-amidating monooxygenase (PAM).